The chain runs to 251 residues: Triosephosphate isomerase (251 aa).

9-11 (NWK) is a substrate binding site. The Electrophile role is filled by His-94. Glu-166 functions as the Proton acceptor in the catalytic mechanism. Substrate is bound by residues Gly-172, Ser-211, and 232–233 (GG).

The protein belongs to the triosephosphate isomerase family. Homodimer.

The protein resides in the cytoplasm. The catalysed reaction is D-glyceraldehyde 3-phosphate = dihydroxyacetone phosphate. It functions in the pathway carbohydrate biosynthesis; gluconeogenesis. It participates in carbohydrate degradation; glycolysis; D-glyceraldehyde 3-phosphate from glycerone phosphate: step 1/1. Its function is as follows. Involved in the gluconeogenesis. Catalyzes stereospecifically the conversion of dihydroxyacetone phosphate (DHAP) to D-glyceraldehyde-3-phosphate (G3P). In Xanthomonas axonopodis pv. citri (strain 306), this protein is Triosephosphate isomerase.